The primary structure comprises 401 residues: S-adenosylmethionine synthase (401 aa).

ATP is bound at residue 137-142 (GEGSGD). Residues 272–305 (GTSAEQGDDGSVGRGNRSNGLITPNRSMSMEATS) are disordered. Positions 287-305 (NRSNGLITPNRSMSMEATS) are enriched in polar residues.

This sequence belongs to the AdoMet synthase 2 family. Requires Mg(2+) as cofactor.

The catalysed reaction is L-methionine + ATP + H2O = S-adenosyl-L-methionine + phosphate + diphosphate. The protein operates within amino-acid biosynthesis; S-adenosyl-L-methionine biosynthesis; S-adenosyl-L-methionine from L-methionine: step 1/1. In terms of biological role, catalyzes the formation of S-adenosylmethionine from methionine and ATP. The protein is S-adenosylmethionine synthase of Natronomonas pharaonis (strain ATCC 35678 / DSM 2160 / CIP 103997 / JCM 8858 / NBRC 14720 / NCIMB 2260 / Gabara) (Halobacterium pharaonis).